The sequence spans 626 residues: 4-hydroxy-3-methylbut-2-en-1-yl diphosphate synthase (flavodoxin) (626 aa).

[4Fe-4S] cluster is bound by residues Cys521, Cys524, Cys555, and Glu562.

It belongs to the IspG family. [4Fe-4S] cluster serves as cofactor.

It carries out the reaction (2E)-4-hydroxy-3-methylbut-2-enyl diphosphate + oxidized [flavodoxin] + H2O + 2 H(+) = 2-C-methyl-D-erythritol 2,4-cyclic diphosphate + reduced [flavodoxin]. Its pathway is isoprenoid biosynthesis; isopentenyl diphosphate biosynthesis via DXP pathway; isopentenyl diphosphate from 1-deoxy-D-xylulose 5-phosphate: step 5/6. Its function is as follows. Converts 2C-methyl-D-erythritol 2,4-cyclodiphosphate (ME-2,4cPP) into 1-hydroxy-2-methyl-2-(E)-butenyl 4-diphosphate. The chain is 4-hydroxy-3-methylbut-2-en-1-yl diphosphate synthase (flavodoxin) from Bacteroides fragilis (strain YCH46).